A 177-amino-acid polypeptide reads, in one-letter code: Inner membrane-spanning protein YciB (177 aa).

Helical transmembrane passes span 22 to 42 (IFIA…LYWI), 50 to 70 (INLF…IFHN), 76 to 96 (WKIT…QFFM), 121 to 141 (FFWA…ALCL), and 151 to 171 (VFGL…YINF).

It belongs to the YciB family.

The protein localises to the cell inner membrane. Plays a role in cell envelope biogenesis, maintenance of cell envelope integrity and membrane homeostasis. In Buchnera aphidicola subsp. Schizaphis graminum (strain Sg), this protein is Inner membrane-spanning protein YciB.